Consider the following 339-residue polypeptide: Uroporphyrinogen decarboxylase (339 aa).

Substrate-binding positions include R23–R27, D72, Y147, S202, and H315.

It belongs to the uroporphyrinogen decarboxylase family. As to quaternary structure, homodimer.

Its subcellular location is the cytoplasm. The enzyme catalyses uroporphyrinogen III + 4 H(+) = coproporphyrinogen III + 4 CO2. It functions in the pathway porphyrin-containing compound metabolism; protoporphyrin-IX biosynthesis; coproporphyrinogen-III from 5-aminolevulinate: step 4/4. Catalyzes the decarboxylation of four acetate groups of uroporphyrinogen-III to yield coproporphyrinogen-III. The chain is Uroporphyrinogen decarboxylase from Desulfotalea psychrophila (strain LSv54 / DSM 12343).